A 1120-amino-acid chain; its full sequence is Mechanosensitive channel MscK (1120 aa).

The N-terminal stretch at 1–33 (MTMFQYYKRSRHFVFSAFIAFVFVLLCQNTAFA) is a signal peptide. At 34–499 (RASSNGDLPT…MKITVNWQKA (466 aa)) the chain is on the periplasmic side. Coiled coils occupy residues 43-98 (TKAD…VAEA), 126-266 (STLS…TLTE), and 360-422 (DELE…RREL). The chain crosses the membrane as a helical span at residues 500 to 520 (WPAVFIAFLAGLPLLLIAGLI). Topologically, residues 521-560 (HWRLGWLKAYQQKLASAVGSLRNDSQLNTPKAILIDLIRA) are cytoplasmic. The helical transmembrane segment at 561 to 581 (LPVCLIILAVGLILLTMQLNI) threads the bilayer. A topological domain (periplasmic) is located at residue Ser-582. Residues 583 to 603 (ELLWSFSKKLAIFWLVFGLCW) traverse the membrane as a helical segment. Topologically, residues 604–634 (KVLEKNGVAVRHFGMPEQQTSHWRRQIVRIS) are cytoplasmic. A helical membrane pass occupies residues 635 to 655 (LALLPIHFWSVVAELSPLHLM). At 656–657 (DD) the chain is on the periplasmic side. A helical transmembrane segment spans residues 658-678 (VLGQAMIFFNLLLIAFLVWPM). Residues 679-692 (CRESWRDKESHTMR) lie on the Cytoplasmic side of the membrane. Residues 693-713 (LVTITVLSIIPIALMVLTATG) traverse the membrane as a helical segment. Topologically, residues 714-728 (YFYTTLRLAGRWIET) are periplasmic. The chain crosses the membrane as a helical span at residues 729–749 (VYLVIIWNLLYQTVLRGLSVA). Residues 750–796 (ARRIAWRRALARRQNLVKEGAEGAEPPEEPTIALEQVNQQTLRITML) are Cytoplasmic-facing. The helical transmembrane segment at 797–817 (LMFALFGVMFWAIWSDLITVF) threads the bilayer. Residues 818–839 (SYLDSITLWHYNGTEAGAAVVK) lie on the Periplasmic side of the membrane. Residues 840 to 860 (NVTMGSLLFAIIASMVAWALI) form a helical membrane-spanning segment. Residues 861-886 (RNLPGLLEVLVLSRLNMRQGASYAIT) lie on the Cytoplasmic side of the membrane. A helical transmembrane segment spans residues 887–907 (TILNYIIIAVGAMTVFGSLGV). Over 908–921 (SWDKLQWLAAALSV) the chain is Periplasmic. The helical transmembrane segment at 922–942 (GLGFGLQEIFGNFVSGLIILF) threads the bilayer. Residues 943–1120 (ERPVRIGDTV…KGDDPTPAVG (178 aa)) are Cytoplasmic-facing. Positions 1057-1081 (YVRELRDRSRTVDELNRTIDQLCRE) form a coiled coil.

The protein belongs to the MscS (TC 1.A.23) family.

It localises to the cell inner membrane. Its function is as follows. Mechanosensitive channel that opens in response to membrane tension and specific ionic conditions. Requires high concentrations of external K(+), NH(4)(+), Rb(+) or Cs(+) to gate. May participate in the regulation of osmotic pressure changes within the cell, although it does not appear to have a major role in osmolarity regulation. Forms an ion channel of 1.0 nanosiemens conductance. The channel can remain active for between 30 seconds and over 3 minutes; it does not desensitize upon extended pressure. Its activity is masked in wild-type cells by the MscS channel. In Escherichia coli (strain K12), this protein is Mechanosensitive channel MscK (mscK).